Consider the following 93-residue polypeptide: Alpha-defensin 5 (93 aa).

The first 19 residues, 1–19 (MKTFVLLSALVLLAFQVQA), serve as a signal peptide directing secretion. Positions 20–58 (DPIHKTDEETNTEEQPGEEDQAVSISFGGQEGSALHEEL) are excised as a propeptide. Cystine bridges form between cysteine 64–cysteine 92, cysteine 66–cysteine 81, and cysteine 71–cysteine 91.

Belongs to the alpha-defensin family.

It localises to the secreted. Probably contributes to the antimicrobial barrier function of the small bowel mucosa. The protein is Alpha-defensin 5 (Defa5) of Mus musculus (Mouse).